The sequence spans 371 residues: Assembly protein G7 (371 aa).

It belongs to the chordopoxvirinae G7 family. Part of a complex composed of A30, G7, F10 kinase, A15, D2, D3, and J1. In terms of processing, phosphorylated on serines by F10 kinase, phosphorylation state is regulated by H1 phosphatase. Undergoes proteolytic processing during morphogenesis, probably required for the transformation of immature virions (IV) into mature virions (MV).

The protein resides in the host cytoplasm. Its subcellular location is the virion. In terms of biological role, late protein which is a part of a large complex required for early virion morphogenesis. This complex participates in the formation of virosomes and the incorporation of virosomal contents into nascent immature virions. This Variola virus (isolate Human/India/Ind3/1967) (VARV) protein is Assembly protein G7.